Consider the following 202-residue polypeptide: Large ribosomal subunit protein uL18 (202 aa).

Belongs to the universal ribosomal protein uL18 family. As to quaternary structure, part of the 50S ribosomal subunit. Contacts the 5S and 23S rRNAs.

Its function is as follows. This is one of the proteins that bind and probably mediate the attachment of the 5S RNA into the large ribosomal subunit, where it forms part of the central protuberance. The chain is Large ribosomal subunit protein uL18 from Staphylothermus marinus (strain ATCC 43588 / DSM 3639 / JCM 9404 / F1).